The primary structure comprises 161 residues: Endoribonuclease YbeY (161 aa).

Positions 121, 125, and 131 each coordinate Zn(2+).

It belongs to the endoribonuclease YbeY family. It depends on Zn(2+) as a cofactor.

Its subcellular location is the cytoplasm. Single strand-specific metallo-endoribonuclease involved in late-stage 70S ribosome quality control and in maturation of the 3' terminus of the 16S rRNA. The sequence is that of Endoribonuclease YbeY from Xylella fastidiosa (strain M23).